The primary structure comprises 354 residues: UDP-N-acetylglucosamine--N-acetylmuramyl-(pentapeptide) pyrophosphoryl-undecaprenol N-acetylglucosamine transferase (354 aa).

UDP-N-acetyl-alpha-D-glucosamine is bound by residues 15–17 (TGG), Asn127, Arg163, Ser191, Ile244, 263–268 (ALTVSE), and Gln288.

It belongs to the glycosyltransferase 28 family. MurG subfamily.

It is found in the cell inner membrane. The catalysed reaction is di-trans,octa-cis-undecaprenyl diphospho-N-acetyl-alpha-D-muramoyl-L-alanyl-D-glutamyl-meso-2,6-diaminopimeloyl-D-alanyl-D-alanine + UDP-N-acetyl-alpha-D-glucosamine = di-trans,octa-cis-undecaprenyl diphospho-[N-acetyl-alpha-D-glucosaminyl-(1-&gt;4)]-N-acetyl-alpha-D-muramoyl-L-alanyl-D-glutamyl-meso-2,6-diaminopimeloyl-D-alanyl-D-alanine + UDP + H(+). It participates in cell wall biogenesis; peptidoglycan biosynthesis. Functionally, cell wall formation. Catalyzes the transfer of a GlcNAc subunit on undecaprenyl-pyrophosphoryl-MurNAc-pentapeptide (lipid intermediate I) to form undecaprenyl-pyrophosphoryl-MurNAc-(pentapeptide)GlcNAc (lipid intermediate II). The polypeptide is UDP-N-acetylglucosamine--N-acetylmuramyl-(pentapeptide) pyrophosphoryl-undecaprenol N-acetylglucosamine transferase (Vibrio cholerae serotype O1 (strain ATCC 39541 / Classical Ogawa 395 / O395)).